A 1067-amino-acid polypeptide reads, in one-letter code: DNA-directed RNA polymerase subunit beta (1067 aa).

The protein belongs to the RNA polymerase beta chain family. In terms of assembly, in plastids the minimal PEP RNA polymerase catalytic core is composed of four subunits: alpha, beta, beta', and beta''. When a (nuclear-encoded) sigma factor is associated with the core the holoenzyme is formed, which can initiate transcription.

The protein localises to the plastid. It is found in the chloroplast. It carries out the reaction RNA(n) + a ribonucleoside 5'-triphosphate = RNA(n+1) + diphosphate. DNA-dependent RNA polymerase catalyzes the transcription of DNA into RNA using the four ribonucleoside triphosphates as substrates. This is DNA-directed RNA polymerase subunit beta from Ipomoea purpurea (Common morning glory).